A 349-amino-acid chain; its full sequence is Alanine racemase (349 aa).

The Proton acceptor; specific for D-alanine role is filled by K35. K35 is modified (N6-(pyridoxal phosphate)lysine). A substrate-binding site is contributed by R130. The active-site Proton acceptor; specific for L-alanine is the Y244. Residue M292 participates in substrate binding.

It belongs to the alanine racemase family. The cofactor is pyridoxal 5'-phosphate.

It carries out the reaction L-alanine = D-alanine. It functions in the pathway amino-acid biosynthesis; D-alanine biosynthesis; D-alanine from L-alanine: step 1/1. Its function is as follows. Catalyzes the interconversion of L-alanine and D-alanine. May also act on other amino acids. The chain is Alanine racemase (alr) from Dinoroseobacter shibae (strain DSM 16493 / NCIMB 14021 / DFL 12).